Reading from the N-terminus, the 210-residue chain is dTTP/UTP pyrophosphatase (210 aa).

The span at 1 to 15 (MTHGDNRDGPGRETR) shows a compositional bias: basic and acidic residues. The disordered stretch occupies residues 1–22 (MTHGDNRDGPGRETRSSGPLVL). Catalysis depends on aspartate 86, which acts as the Proton acceptor.

Belongs to the Maf family. YhdE subfamily. The cofactor is a divalent metal cation.

It localises to the cytoplasm. It catalyses the reaction dTTP + H2O = dTMP + diphosphate + H(+). The catalysed reaction is UTP + H2O = UMP + diphosphate + H(+). Functionally, nucleoside triphosphate pyrophosphatase that hydrolyzes dTTP and UTP. May have a dual role in cell division arrest and in preventing the incorporation of modified nucleotides into cellular nucleic acids. This chain is dTTP/UTP pyrophosphatase, found in Rhodospirillum rubrum (strain ATCC 11170 / ATH 1.1.1 / DSM 467 / LMG 4362 / NCIMB 8255 / S1).